Here is a 336-residue protein sequence, read N- to C-terminus: MTTFLAGGTGTPKLLAGARRVFDPAETTVVGNTGDDVALGGLLVCPDLDTVLFEGGGVLDRETWWGIADDGSTTHDYLTDLAAAADIDPDTPRYLPDDAQTAGRDIARWRRFSAASEFMFIGDRDRAVHTLRAGLLDEGHTLTEVTRRLADAFDLSVDLVPMSNDPVATIVQTPDGEQHFQTFWVAEHGDPTVEDVEFRGGERATAAQPAIEAIRDGPVVVGPSNPVTSIGPMLALDGIADALRDAQVVAVSPFVEDEVFSGPAAKLMAAVGHDPSTAGVADAYDFADAFVLDTADSTDLDRPVVRTDTSLDTEADAERVARACRDALVAASGEVT.

Aspartate 49 is a binding site for 7,8-didemethyl-8-hydroxy-5-deazariboflavin.

This sequence belongs to the CofD family. As to quaternary structure, homodimer. Mg(2+) serves as cofactor.

The enzyme catalyses (2S)-lactyl-2-diphospho-5'-guanosine + 7,8-didemethyl-8-hydroxy-5-deazariboflavin = oxidized coenzyme F420-0 + GMP + H(+). It functions in the pathway cofactor biosynthesis; coenzyme F420 biosynthesis. Catalyzes the transfer of the 2-phospholactate moiety from (2S)-lactyl-2-diphospho-5'-guanosine to 7,8-didemethyl-8-hydroxy-5-deazariboflavin (FO) with the formation of oxidized coenzyme F420-0 and GMP. The protein is 2-phospho-L-lactate transferase of Halobacterium salinarum (strain ATCC 700922 / JCM 11081 / NRC-1) (Halobacterium halobium).